The sequence spans 178 residues: MFSKFFSLQKAFAAARRRLLILILVLGMAGYAWGPALAARQIPPVALSPTESITFTEAQLARGKQLFNRACAQCHVGGQTYPNPDVTLKLSDLEGATPPRDNVLAIVDYIKNPVTYDGVESLVEYHPNTQLLSEYPRLRNLTDEDLKLIAGYILVQAKTVPGWGGTKSESHSDLSAYL.

Residues Met1–Ala38 form the signal peptide. Heme c is bound by residues Cys71, Cys74, His75, and His126.

This sequence belongs to the cytochrome c family. PsbV subfamily. PSII is composed of 1 copy each of membrane proteins PsbA, PsbB, PsbC, PsbD, PsbE, PsbF, PsbH, PsbI, PsbJ, PsbK, PsbL, PsbM, PsbT, PsbX, PsbY, PsbZ, Psb30/Ycf12, peripheral proteins PsbO, CyanoQ (PsbQ), PsbU, PsbV and a large number of cofactors. It forms dimeric complexes. The cofactor is heme c.

The protein localises to the cellular thylakoid membrane. Functionally, one of the extrinsic, lumenal subunits of photosystem II (PSII). PSII is a light-driven water plastoquinone oxidoreductase, using light energy to abstract electrons from H(2)O, generating a proton gradient subsequently used for ATP formation. The extrinsic proteins stabilize the structure of photosystem II oxygen-evolving complex (OEC), the ion environment of oxygen evolution and protect the OEC against heat-induced inactivation. Low-potential cytochrome c that plays a role in the OEC of PSII. The polypeptide is Photosystem II extrinsic protein V (Synechococcus sp. (strain JA-3-3Ab) (Cyanobacteria bacterium Yellowstone A-Prime)).